The primary structure comprises 304 residues: Methionyl-tRNA formyltransferase (304 aa).

(6S)-5,6,7,8-tetrahydrofolate is bound at residue 107–110 (SLLP).

The protein belongs to the Fmt family.

The enzyme catalyses L-methionyl-tRNA(fMet) + (6R)-10-formyltetrahydrofolate = N-formyl-L-methionyl-tRNA(fMet) + (6S)-5,6,7,8-tetrahydrofolate + H(+). Functionally, attaches a formyl group to the free amino group of methionyl-tRNA(fMet). The formyl group appears to play a dual role in the initiator identity of N-formylmethionyl-tRNA by promoting its recognition by IF2 and preventing the misappropriation of this tRNA by the elongation apparatus. The sequence is that of Methionyl-tRNA formyltransferase from Coprothermobacter proteolyticus (strain ATCC 35245 / DSM 5265 / OCM 4 / BT).